We begin with the raw amino-acid sequence, 352 residues long: MQTYGNPSVTYDWYAGNSGTANRSGKFIAAHAAHAGLMMFWAGAFTLFELARYDSSVAMGNQNLICLPHLAQLGIGGIENGVITEPYGCTVIAVLHLIFSGVLGAGGILHSTRYDGDLGNYPEGSRPKKFDFEWDDPDKLTFILGHHLIFLGLANIQFVEWAQYHGIWDTALGATRTVSYNLDLGMIWNHQADFLQITSLEDVMGGHAFLAFFQIIGGAFHIITKQFGEYTEFKGKGLLSAEAVLSYSLAGVGYCALVAAFWSSTNTTVYSTEFFGEVLQLKFDFAPYFVDTDPSLAAGAHTARAWLANVHFYLGFFFIQGHLWHALRAMGFDFRRVGKAFDNMENAKITNG.

6 helical membrane-spanning segments follow: residues 27 to 47 (FIAAHAAHAGLMMFWAGAFTL), 89 to 109 (CTVIAVLHLIFSGVLGAGGIL), 142 to 162 (FILGHHLIFLGLANIQFVEWA), 203 to 223 (VMGGHAFLAFFQIIGGAFHII), 243 to 263 (AVLSYSLAGVGYCALVAAFWS), and 307 to 327 (LANVHFYLGFFFIQGHLWHAL).

Belongs to the PsbB/PsbC family. IsiA/Pcb subfamily. In terms of assembly, the antenna complex consists of divinyl chlorophylls (a and b) and divinyl chlorophyll a/b binding proteins and binds more divinyl chlorophyll b than does the antenna complex from high-light-adapted Prochlorococcus. The cofactor is divinyl chlorophyll a. Requires divinyl chlorophyll b as cofactor.

The protein localises to the cellular thylakoid membrane. The antenna complex functions as a light receptor, it captures and delivers excitation energy to photosystems II and I. The Prochlorales pcb genes are not related to higher plant LHCs. This Prochlorococcus marinus (strain NATL2A) protein is Divinyl chlorophyll a/b light-harvesting protein PcbB (pcbB).